The chain runs to 641 residues: Protein BCAP (641 aa).

4 coiled-coil regions span residues 83–144 (HWPV…KQND), 191–270 (EKDN…RKLE), 299–375 (QKQK…EREQ), and 487–599 (FKLE…TLNA).

This sequence belongs to the ODF2 family.

The protein resides in the cytoplasm. It localises to the cytoskeleton. It is found in the microtubule organizing center. Its subcellular location is the centrosome. The protein localises to the centriole. The protein resides in the centriolar satellite. It localises to the cilium basal body. Acts as a suppressor of ciliogenesis, specifically, the initiation of ciliogenesis. The chain is Protein BCAP (odf2l) from Xenopus laevis (African clawed frog).